The primary structure comprises 154 residues: Large-conductance mechanosensitive channel (154 aa).

The next 2 membrane-spanning stretches (helical) occupy residues 12-32 (GNIV…ALIT) and 71-91 (IVLS…FLVV). The disordered stretch occupies residues 129 to 154 (NGAPSGRHVDTADLTPTPNHEPRADT).

Belongs to the MscL family. Homopentamer.

It localises to the cell membrane. Channel that opens in response to stretch forces in the membrane lipid bilayer. May participate in the regulation of osmotic pressure changes within the cell. The sequence is that of Large-conductance mechanosensitive channel from Mycobacterium leprae (strain Br4923).